A 799-amino-acid polypeptide reads, in one-letter code: Sodium- and chloride-dependent glycine transporter 2 (799 aa).

Positions 1–64 (MDCSAPKEMN…RSASTGAQTF (64 aa)) are disordered. Over 1–201 (MDCSAPKEMN…ARGNWSSKLD (201 aa)) the chain is Cytoplasmic. The segment covering 40-57 (PAAAPAAAVQPPRVPRSA) has biased composition (low complexity). Residue Ser-58 is modified to Phosphoserine. Thr-59 carries the phosphothreonine modification. Ser-86 is subject to Phosphoserine. 3 helical membrane-spanning segments follow: residues 202–222 (FILS…FPYL), 230–249 (AFLI…IFFL), and 273–293 (GCGI…NVII). 4 residues coordinate Na(+): Gly-208, Ala-210, Val-211, and Asn-215. The Extracellular segment spans residues 294–395 (CYTLFYLFAS…AGIEYPGEIR (102 aa)). An intrachain disulfide couples Cys-313 to Cys-322. 4 N-linked (GlcNAc...) asparagine glycosylation sites follow: Asn-345, Asn-355, Asn-360, and Asn-366. Helical transmembrane passes span 396-414 (WPLA…ASLA), 423-440 (VVYF…ILLI), 476-493 (IFFS…LSSY), 505-526 (LIVT…FSVI), and 559-578 (LPLS…TLGL). Residues Ser-479, Asn-511, Leu-576, and Asp-579 each contribute to the Na(+) site. 4 helical membrane-spanning segments follow: residues 606 to 624 (VFTL…PMIT), 640 to 660 (SYAL…VYGL), 681 to 700 (VCWA…FSFY), and 719 to 737 (LGWL…MFVI). The Cytoplasmic portion of the chain corresponds to 738–799 (KMYLAPGRFI…VKDLELGTQC (62 aa)).

It belongs to the sodium:neurotransmitter symporter (SNF) (TC 2.A.22) family. SLC6A5 subfamily. Post-translationally, N-glycosylated. Specifically expressed in spinal cord, brain stem, and to a lesser extent in the cerebellum.

Its subcellular location is the cell membrane. The catalysed reaction is glycine(out) + chloride(out) + 3 Na(+)(out) = glycine(in) + chloride(in) + 3 Na(+)(in). Its function is as follows. Sodium- and chloride-dependent glycine transporter. Terminates the action of glycine by its high affinity sodium-dependent reuptake into presynaptic terminals. May be responsible for the termination of neurotransmission at strychnine-sensitive glycinergic synapses. The polypeptide is Sodium- and chloride-dependent glycine transporter 2 (Slc6a5) (Rattus norvegicus (Rat)).